The following is a 154-amino-acid chain: Ribonuclease H (154 aa).

The region spanning 1–142 (MKQVDIFTDG…CDTIARGHAS (142 aa)) is the RNase H type-1 domain. Mg(2+)-binding residues include aspartate 9, glutamate 47, aspartate 69, and aspartate 134.

Belongs to the RNase H family. Monomer. Requires Mg(2+) as cofactor.

The protein resides in the cytoplasm. It carries out the reaction Endonucleolytic cleavage to 5'-phosphomonoester.. Functionally, endonuclease that specifically degrades the RNA of RNA-DNA hybrids. The chain is Ribonuclease H from Oleidesulfovibrio alaskensis (strain ATCC BAA-1058 / DSM 17464 / G20) (Desulfovibrio alaskensis).